Reading from the N-terminus, the 223-residue chain is Coiled-coil domain-containing protein 124 (223 aa).

The tract at residues 1-126 (MPKKFQGENT…AEKAKSHLEV (126 aa)) is disordered. Residues 15–82 (ARARRAEAKA…LLEEEDSKLK (68 aa)) are a coiled coil. 2 stretches are compositionally biased toward basic and acidic residues: residues 18 to 74 (RRAE…QRLL) and 99 to 126 (QIED…HLEV). 2 positions are modified to phosphoserine: Ser-141 and Ser-194. The segment at 204–223 (WLRSPDNPMNQRAVPFNAPK) is disordered.

The protein belongs to the CCDC124 family. Associates with translationally inactive ribosomes in the nonrotated state. Interacts with RASGEF1B. Ubiquitously expressed.

The protein localises to the cytoplasm. It is found in the cytoskeleton. The protein resides in the microtubule organizing center. Its subcellular location is the centrosome. It localises to the midbody. Ribosome-binding protein involved in ribosome hibernation: associates with translationally inactive ribosomes and stabilizes the nonrotated conformation of the 80S ribosome, thereby promoting ribosome preservation and storage. Also required for proper progression of late cytokinetic stages. The polypeptide is Coiled-coil domain-containing protein 124 (Homo sapiens (Human)).